A 357-amino-acid chain; its full sequence is MRRTTRARTGLSALLLAASLGLGAAPAGADAPQRPAPTPASDSAAALHALDAAVERTLGDDSAGTYVDAGTGELVVTVTTEAAAAKVRAAGATPRRVQRGAAELDAAMAALEARAKIPGTSWGLDPRTNRIAVEADSSVSARDLARLRKVAASLDGAVSVTRVPGVFQREVAGGDAIYGGGSRCSAAFNVTKNGVRYFLTAGHCTNLSSTWSSTSGGTSIGVREGTSFPTNDYGIVRYTTTTNVDGRVNLYNGGYQDIASAADAVVGQAIKKSGSTTKVTSGTVSAVNVTVNYSDGPVYGMVRTTACSAGGDSGGAHFAGSVALGIHSGSSGCTGTNGSAIHQPVREALSAYGVNVY.

An N-terminal signal peptide occupies residues 1–29; it reads MRRTTRARTGLSALLLAASLGLGAAPAGA. Positions 30–170 are excised as a propeptide; that stretch reads DAPQRPAPTP…TRVPGVFQRE (141 aa). Cysteine 184 and cysteine 204 are oxidised to a cystine. Active-site charge relay system residues include histidine 203, aspartate 232, and serine 313. Cysteine 307 and cysteine 333 are joined by a disulfide.

This sequence belongs to the peptidase S1 family.

The protein localises to the secreted. In terms of biological role, serine protease that preferentially cleaves peptide bonds on the C-terminal side of aspartate and glutamate with a 10-fold higher reactivity for a glutamyl bond than an aspartyl bond. This is Serine protease 1 from Streptomyces fradiae (Streptomyces roseoflavus).